The sequence spans 481 residues: Alpha-L-arabinofuranosidase 43 (481 aa).

Residues 1 to 19 (MRFSVFTAAIAAAFSACCA) form the signal peptide. N-linked (GlcNAc...) asparagine glycans are attached at residues asparagine 158, asparagine 176, and asparagine 365.

Belongs to the glycosyl hydrolase 43 family.

Its subcellular location is the secreted. The enzyme catalyses Hydrolysis of terminal non-reducing alpha-L-arabinofuranoside residues in alpha-L-arabinosides.. Activity is significantly inhibited by SDS and partially inhibited by Ag(+), Fe(3+) and beta-mercaptoethanol. Its function is as follows. Alpha-L-arabinofuranosidase specific for the cleavage of alpha-1,3-linkage. Shows high activity against 4-nitrophenyl alpha-L-arabinofuranoside, debranched arabinan, and sugar beet arabinan. The polypeptide is Alpha-L-arabinofuranosidase 43 (Humicola insolens (Soft-rot fungus)).